The sequence spans 2365 residues: TRIO and F-actin-binding protein (2365 aa).

4 disordered regions span residues 48 to 1106 (VPYC…HEPL), 1168 to 1554 (HRDA…SERR), 1593 to 1667 (LPRK…WPKI), and 1679 to 1751 (AGLE…TSWR). Over residues 132–151 (SDPTSSPDSATPDDTSNSSS) the composition is skewed to low complexity. Phosphothreonine is present on histidine 221. Composition is skewed to polar residues over residues 239-271 (TLTQASSMTPHSGPRSTTSQASPAQRDTAQAAS), 291-375 (RASS…TPQR), 403-422 (RTSCAQRDNPKASRTSSPNR), 429-471 (RTSC…SPNR), 478-520 (RTSC…SPNR), 527-569 (RTSC…SPNR), 576-618 (RTSC…SPNR), 625-650 (RTSCAQRDNPRASSPNRTTQQDSPRT), 661-674 (SSPNRTIQQENPRT), 683-701 (RASSPSRTIQQENPRTSCA), 709-722 (SSPNRTTQQENPRT), 745-785 (RTSC…SPNR), and 807-837 (IRATQQDNPRTCIQQNIPRSSSTQQDNPKTS). An essentiel for its aggregation region spans residues 324-348 (STQEDTPRASSTQWNTPRASSPSRS). Phosphothreonine is present on glutamine 457. Residues 839-854 (TKRDNLRPTCTQRDRT) show a composition bias toward basic and acidic residues. Polar residues-rich tracts occupy residues 855-898 (QSFS…SSPH), 913-927 (PTQSDGPRTSSPSRS), and 945-994 (DRPQ…TSSP). A compositionally biased stretch (basic and acidic residues) spans 1045–1056 (RAPESEPPHHEP). Residues 1195-1206 (SMESLAPSTDSL) are compositionally biased toward polar residues. Basic and acidic residues-rich tracts occupy residues 1260-1270 (ETRHNLEREEY) and 1303-1319 (GRAEVERLFGQERRKSE). The span at 1332–1349 (SQQPSQGQSQLLRRQSSP) shows a compositional bias: low complexity. Composition is skewed to basic and acidic residues over residues 1378 to 1387 (SPEKRPEGDR) and 1402 to 1411 (TPERELRTQR). Residues 1452-1461 (GGLGPGGWWG) are compositionally biased toward gly residues. Residues 1494–1508 (WEEKPTHELPRELGK) are compositionally biased toward basic and acidic residues. Polar residues predominate over residues 1524–1534 (ESSQSWHSGTP). A compositionally biased stretch (basic and acidic residues) spans 1594–1606 (PRKDPAGHRDDLA). A compositionally biased stretch (polar residues) spans 1645–1664 (ALQSQSPVQLPSPACTSTQW). The span at 1696 to 1705 (PSLPELQFQP) shows a compositional bias: low complexity. Residues 1724–1735 (KQADSADKRPAE) are compositionally biased toward basic and acidic residues. One can recognise a PH domain in the interval 1778 to 1887 (LNFKKGWMSI…WIEALRKTVR (110 aa)). The residue at position 1796 (serine 1796) is a Phosphoserine. 2 disordered regions span residues 1889–2017 (TSAP…LTED) and 2174–2194 (LSKTRSLQQGPDGLRKQHQSD). Position 1930 is an omega-N-methylarginine (arginine 1930). A phosphoserine mark is found at serine 1949 and serine 1955. A compositionally biased stretch (basic and acidic residues) spans 1965 to 1997 (TPDRLAKQEELERDLAQRSEERRKWFEATDSRT). Coiled-coil stretches lie at residues 2062-2247 (SDGH…NQEL) and 2281-2361 (ELEV…SMRN).

In terms of assembly, isoform 1 forms aggregates. Isoform 1 binds to TRIO and F-actin. Isoform 1 may also interact with myosin II. Interacts with HECTD3. Interacts with PJVK. Interacts with TERF1; mediates TERF1 localization to the centrosome. Ubiquitinated by HECTD3, leading to its degradation by the proteasome. Post-translationally, phosphorylation at Thr-457 by PLK1 ensures mitotic progression and is essential for accurate chromosome segregation. Phosphorylation at residues Thr-221 and Thr-457 by kinase NEK2A and PLK1 coordinates TERF1 translocation from telomere to spindle pole. Widely expressed. Highly expressed in heart and placenta. As to expression, expressed in fetal brain, retina and cochlea but is not detectable in the other tissues.

It is found in the nucleus. It localises to the cytoplasm. The protein resides in the cytoskeleton. The protein localises to the microtubule organizing center. Its subcellular location is the centrosome. It is found in the midbody. It localises to the chromosome. The protein resides in the telomere. Functionally, regulates actin cytoskeletal organization, cell spreading and cell contraction by directly binding and stabilizing filamentous F-actin and prevents its depolymerization. May also serve as a linker protein to recruit proteins required for F-actin formation and turnover. Essential for correct mitotic progression. In terms of biological role, plays a pivotal role in the formation of stereocilia rootlets. The sequence is that of TRIO and F-actin-binding protein (TRIOBP) from Homo sapiens (Human).